A 240-amino-acid polypeptide reads, in one-letter code: 4-hydroxy-tetrahydrodipicolinate reductase (240 aa).

NAD(+)-binding positions include 79–81 and 103–106; these read ATT and SANM. Histidine 135 acts as the Proton donor/acceptor in catalysis. Histidine 136 contributes to the (S)-2,3,4,5-tetrahydrodipicolinate binding site. The active-site Proton donor is the lysine 139. Residue 145 to 146 participates in (S)-2,3,4,5-tetrahydrodipicolinate binding; the sequence is GT.

This sequence belongs to the DapB family.

It is found in the cytoplasm. It catalyses the reaction (S)-2,3,4,5-tetrahydrodipicolinate + NAD(+) + H2O = (2S,4S)-4-hydroxy-2,3,4,5-tetrahydrodipicolinate + NADH + H(+). It carries out the reaction (S)-2,3,4,5-tetrahydrodipicolinate + NADP(+) + H2O = (2S,4S)-4-hydroxy-2,3,4,5-tetrahydrodipicolinate + NADPH + H(+). Its pathway is amino-acid biosynthesis; L-lysine biosynthesis via DAP pathway; (S)-tetrahydrodipicolinate from L-aspartate: step 4/4. Functionally, catalyzes the conversion of 4-hydroxy-tetrahydrodipicolinate (HTPA) to tetrahydrodipicolinate. This is 4-hydroxy-tetrahydrodipicolinate reductase from Staphylococcus aureus (strain MRSA252).